Reading from the N-terminus, the 501-residue chain is Putative ribose/galactose/methyl galactoside import ATP-binding protein 1 (501 aa).

2 ABC transporter domains span residues 5-237 (VSLS…VGRQ) and 249-492 (VPGE…MTRS). 37–44 (GENGAGKS) contacts ATP.

This sequence belongs to the ABC transporter superfamily. Carbohydrate importer 2 (CUT2) (TC 3.A.1.2) family.

It is found in the cell inner membrane. It carries out the reaction D-ribose(out) + ATP + H2O = D-ribose(in) + ADP + phosphate + H(+). It catalyses the reaction D-galactose(out) + ATP + H2O = D-galactose(in) + ADP + phosphate + H(+). In terms of biological role, part of an ABC transporter complex involved in carbohydrate import. Could be involved in ribose, galactose and/or methyl galactoside import. Responsible for energy coupling to the transport system. The protein is Putative ribose/galactose/methyl galactoside import ATP-binding protein 1 of Rhizobium meliloti (strain 1021) (Ensifer meliloti).